The following is a 316-amino-acid chain: Ribosomal RNA small subunit methyltransferase H (316 aa).

Residues 35–37, D55, F84, D105, and Q112 each bind S-adenosyl-L-methionine; that span reads SGH.

It belongs to the methyltransferase superfamily. RsmH family.

Its subcellular location is the cytoplasm. It carries out the reaction cytidine(1402) in 16S rRNA + S-adenosyl-L-methionine = N(4)-methylcytidine(1402) in 16S rRNA + S-adenosyl-L-homocysteine + H(+). Functionally, specifically methylates the N4 position of cytidine in position 1402 (C1402) of 16S rRNA. The protein is Ribosomal RNA small subunit methyltransferase H of Streptococcus equi subsp. zooepidemicus (strain H70).